A 468-amino-acid chain; its full sequence is Ribulose bisphosphate carboxylase large chain (468 aa).

Position 7 is an N6,N6,N6-trimethyllysine (K7). N116 and T166 together coordinate substrate. The Proton acceptor role is filled by K168. K170 provides a ligand contact to substrate. Residues K194, D196, and E197 each coordinate Mg(2+). The residue at position 194 (K194) is an N6-carboxylysine. Residue H287 is the Proton acceptor of the active site. Positions 288, 320, and 372 each coordinate substrate.

The protein belongs to the RuBisCO large chain family. Type I subfamily. In terms of assembly, heterohexadecamer of 8 large chains and 8 small chains; disulfide-linked. The disulfide link is formed within the large subunit homodimers. Mg(2+) is required as a cofactor. In terms of processing, the disulfide bond which can form in the large chain dimeric partners within the hexadecamer appears to be associated with oxidative stress and protein turnover.

The protein localises to the plastid. The protein resides in the chloroplast. The catalysed reaction is 2 (2R)-3-phosphoglycerate + 2 H(+) = D-ribulose 1,5-bisphosphate + CO2 + H2O. The enzyme catalyses D-ribulose 1,5-bisphosphate + O2 = 2-phosphoglycolate + (2R)-3-phosphoglycerate + 2 H(+). In terms of biological role, ruBisCO catalyzes two reactions: the carboxylation of D-ribulose 1,5-bisphosphate, the primary event in carbon dioxide fixation, as well as the oxidative fragmentation of the pentose substrate in the photorespiration process. Both reactions occur simultaneously and in competition at the same active site. This chain is Ribulose bisphosphate carboxylase large chain, found in Cornus alternifolia (Pagoda dogwood).